The following is a 64-amino-acid chain: Defensin-like protein 41 (64 aa).

The interval 1–21 (MTQGKRKHPCDLKNPSKRAPP) is disordered. Disulfide bonds link cysteine 10–cysteine 61, cysteine 24–cysteine 47, cysteine 33–cysteine 56, and cysteine 37–cysteine 58.

The protein belongs to the DEFL family.

In Arabidopsis thaliana (Mouse-ear cress), this protein is Defensin-like protein 41.